Reading from the N-terminus, the 211-residue chain is Ribonuclease T (211 aa).

The Exonuclease domain maps to 24-198 (VVVDVETGGF…YDAEKTAHLF (175 aa)). Mg(2+)-binding residues include aspartate 27, glutamate 29, histidine 185, and aspartate 190. The active-site Proton donor/acceptor is the histidine 185.

It belongs to the RNase T family. As to quaternary structure, homodimer. It depends on Mg(2+) as a cofactor.

Its function is as follows. Trims short 3' overhangs of a variety of RNA species, leaving a one or two nucleotide 3' overhang. Responsible for the end-turnover of tRNA: specifically removes the terminal AMP residue from uncharged tRNA (tRNA-C-C-A). Also appears to be involved in tRNA biosynthesis. This is Ribonuclease T from Xylella fastidiosa (strain 9a5c).